A 519-amino-acid polypeptide reads, in one-letter code: Anthranilate synthase component 1 (519 aa).

L-tryptophan contacts are provided by residues serine 39 and 290–292 (PYM). 327 to 328 (GT) contacts chorismate. Mg(2+) is bound at residue glutamate 360. Chorismate-binding positions include tyrosine 448, arginine 468, 482–484 (GAG), and glycine 484. Glutamate 497 provides a ligand contact to Mg(2+).

The protein belongs to the anthranilate synthase component I family. Heterotetramer consisting of two non-identical subunits: a beta subunit (TrpG) and a large alpha subunit (TrpE). Mg(2+) is required as a cofactor.

The catalysed reaction is chorismate + L-glutamine = anthranilate + pyruvate + L-glutamate + H(+). The protein operates within amino-acid biosynthesis; L-tryptophan biosynthesis; L-tryptophan from chorismate: step 1/5. Its activity is regulated as follows. Feedback inhibited by tryptophan. Its function is as follows. Part of a heterotetrameric complex that catalyzes the two-step biosynthesis of anthranilate, an intermediate in the biosynthesis of L-tryptophan. In the first step, the glutamine-binding beta subunit (TrpG) of anthranilate synthase (AS) provides the glutamine amidotransferase activity which generates ammonia as a substrate that, along with chorismate, is used in the second step, catalyzed by the large alpha subunit of AS (TrpE) to produce anthranilate. In the absence of TrpG, TrpE can synthesize anthranilate directly from chorismate and high concentrations of ammonia. This Serratia marcescens protein is Anthranilate synthase component 1 (trpE).